Here is a 466-residue protein sequence, read N- to C-terminus: UDP-N-acetylmuramoylalanine--D-glutamate ligase (466 aa).

Position 121–127 (121–127 (GTNGKST)) interacts with ATP.

This sequence belongs to the MurCDEF family.

Its subcellular location is the cytoplasm. The catalysed reaction is UDP-N-acetyl-alpha-D-muramoyl-L-alanine + D-glutamate + ATP = UDP-N-acetyl-alpha-D-muramoyl-L-alanyl-D-glutamate + ADP + phosphate + H(+). It functions in the pathway cell wall biogenesis; peptidoglycan biosynthesis. Cell wall formation. Catalyzes the addition of glutamate to the nucleotide precursor UDP-N-acetylmuramoyl-L-alanine (UMA). The chain is UDP-N-acetylmuramoylalanine--D-glutamate ligase from Mesorhizobium japonicum (strain LMG 29417 / CECT 9101 / MAFF 303099) (Mesorhizobium loti (strain MAFF 303099)).